A 149-amino-acid chain; its full sequence is Transcriptional repressor NrdR (149 aa).

The segment at 3-34 (CPFCSATDTKVIDSRLVAEGHQVRRRRECTEC) is a zinc-finger region. Residues 49 to 139 (PRVIKRDGSR…VYRAFEDVSE (91 aa)) form the ATP-cone domain.

Belongs to the NrdR family. The cofactor is Zn(2+).

Functionally, negatively regulates transcription of bacterial ribonucleotide reductase nrd genes and operons by binding to NrdR-boxes. In Shewanella baltica (strain OS223), this protein is Transcriptional repressor NrdR.